Consider the following 159-residue polypeptide: ATP synthase subunit b (159 aa).

The helical transmembrane segment at 4–24 (VGINGTLIVQLVTFVILVALL) threads the bilayer.

It belongs to the ATPase B chain family. In terms of assembly, F-type ATPases have 2 components, F(1) - the catalytic core - and F(0) - the membrane proton channel. F(1) has five subunits: alpha(3), beta(3), gamma(1), delta(1), epsilon(1). F(0) has three main subunits: a(1), b(2) and c(10-14). The alpha and beta chains form an alternating ring which encloses part of the gamma chain. F(1) is attached to F(0) by a central stalk formed by the gamma and epsilon chains, while a peripheral stalk is formed by the delta and b chains.

The protein localises to the cell inner membrane. F(1)F(0) ATP synthase produces ATP from ADP in the presence of a proton or sodium gradient. F-type ATPases consist of two structural domains, F(1) containing the extramembraneous catalytic core and F(0) containing the membrane proton channel, linked together by a central stalk and a peripheral stalk. During catalysis, ATP synthesis in the catalytic domain of F(1) is coupled via a rotary mechanism of the central stalk subunits to proton translocation. Its function is as follows. Component of the F(0) channel, it forms part of the peripheral stalk, linking F(1) to F(0). The sequence is that of ATP synthase subunit b from Acidithiobacillus ferrooxidans (strain ATCC 23270 / DSM 14882 / CIP 104768 / NCIMB 8455) (Ferrobacillus ferrooxidans (strain ATCC 23270)).